The chain runs to 585 residues: Eukaryotic translation initiation factor 3 subunit D (585 aa).

Residues 43-60 (LGRMADWTGDGKDRDRGG) show a composition bias toward basic and acidic residues. Disordered regions lie at residues 43-62 (LGRM…GGRQ) and 109-152 (RGGG…NRSA). Residues 109 to 130 (RGGGTVFRGRGQRGVGQRGGRA) are compositionally biased toward gly residues. The segment at 300–314 (SIDLVTVNENAADAP) is RNA gate. A disordered region spans residues 560-585 (VPPNTFEEDDEAAEEQEEKAEEESEE). Positions 565–585 (FEEDDEAAEEQEEKAEEESEE) are enriched in acidic residues.

This sequence belongs to the eIF-3 subunit D family. As to quaternary structure, component of the eukaryotic translation initiation factor 3 (eIF-3) complex.

It is found in the cytoplasm. In terms of biological role, mRNA cap-binding component of the eukaryotic translation initiation factor 3 (eIF-3) complex, which is involved in protein synthesis of a specialized repertoire of mRNAs and, together with other initiation factors, stimulates binding of mRNA and methionyl-tRNAi to the 40S ribosome. The eIF-3 complex specifically targets and initiates translation of a subset of mRNAs involved in cell proliferation. In the eIF-3 complex, eif3d specifically recognizes and binds the 7-methylguanosine cap of a subset of mRNAs. This chain is Eukaryotic translation initiation factor 3 subunit D, found in Neosartorya fischeri (strain ATCC 1020 / DSM 3700 / CBS 544.65 / FGSC A1164 / JCM 1740 / NRRL 181 / WB 181) (Aspergillus fischerianus).